The sequence spans 220 residues: Riboflavin kinase (220 aa).

Residues 1-92 (MDTSDQYYRA…LSRILSIKSN (92 aa)) are H-T-H motif-like. The tract at residues 93-220 (IVMTGIVVPG…GDEVTIEVTA (128 aa)) is riboflavin kinase. 102–107 (GMGEGK) contacts CDP. Thr-131 and Asn-133 together coordinate Mg(2+). Residues Thr-188 and Glu-195 each coordinate FMN. 200-203 (KYLR) serves as a coordination point for CDP.

It belongs to the archaeal riboflavin kinase family. Mg(2+) serves as cofactor.

The catalysed reaction is riboflavin + CTP = CDP + FMN + H(+). It functions in the pathway cofactor biosynthesis; FMN biosynthesis; FMN from riboflavin (CTP route): step 1/1. In terms of biological role, catalyzes the CTP-dependent phosphorylation of riboflavin (vitamin B2) to form flavin mononucleotide (FMN). The chain is Riboflavin kinase (ribK) from Thermoplasma volcanium (strain ATCC 51530 / DSM 4299 / JCM 9571 / NBRC 15438 / GSS1).